The primary structure comprises 435 residues: Gamma-glutamyl phosphate reductase (435 aa).

The protein belongs to the gamma-glutamyl phosphate reductase family.

The protein resides in the cytoplasm. It carries out the reaction L-glutamate 5-semialdehyde + phosphate + NADP(+) = L-glutamyl 5-phosphate + NADPH + H(+). It participates in amino-acid biosynthesis; L-proline biosynthesis; L-glutamate 5-semialdehyde from L-glutamate: step 2/2. Catalyzes the NADPH-dependent reduction of L-glutamate 5-phosphate into L-glutamate 5-semialdehyde and phosphate. The product spontaneously undergoes cyclization to form 1-pyrroline-5-carboxylate. This chain is Gamma-glutamyl phosphate reductase, found in Synechococcus sp. (strain CC9605).